Consider the following 123-residue polypeptide: Small ribosomal subunit protein uS13 (123 aa).

Residues 92-123 (HRRGLPVRGQKTKTNARTRKGPKKLVVSRKKK) are disordered.

This sequence belongs to the universal ribosomal protein uS13 family. In terms of assembly, part of the 30S ribosomal subunit. Forms a loose heterodimer with protein S19. Forms two bridges to the 50S subunit in the 70S ribosome.

Its function is as follows. Located at the top of the head of the 30S subunit, it contacts several helices of the 16S rRNA. In the 70S ribosome it contacts the 23S rRNA (bridge B1a) and protein L5 of the 50S subunit (bridge B1b), connecting the 2 subunits; these bridges are implicated in subunit movement. Contacts the tRNAs in the A and P-sites. In Clostridium tetani (strain Massachusetts / E88), this protein is Small ribosomal subunit protein uS13.